We begin with the raw amino-acid sequence, 44 residues long: Photosystem II reaction center protein K (44 aa).

Positions 1-7 are excised as a propeptide; it reads METLLLS. A helical membrane pass occupies residues 23-43; that stretch reads LPIIPVFFLLLAFVWQAAIGF.

The protein belongs to the PsbK family. As to quaternary structure, PSII is composed of 1 copy each of membrane proteins PsbA, PsbB, PsbC, PsbD, PsbE, PsbF, PsbH, PsbI, PsbJ, PsbK, PsbL, PsbM, PsbT, PsbX, PsbY, PsbZ, Psb30/Ycf12, at least 3 peripheral proteins of the oxygen-evolving complex and a large number of cofactors. It forms dimeric complexes.

It is found in the plastid. Its subcellular location is the chloroplast thylakoid membrane. One of the components of the core complex of photosystem II (PSII). PSII is a light-driven water:plastoquinone oxidoreductase that uses light energy to abstract electrons from H(2)O, generating O(2) and a proton gradient subsequently used for ATP formation. It consists of a core antenna complex that captures photons, and an electron transfer chain that converts photonic excitation into a charge separation. The protein is Photosystem II reaction center protein K of Phaeodactylum tricornutum (strain CCAP 1055/1).